The primary structure comprises 774 residues: Lon protease 1 (774 aa).

Positions 9–202 (IPLLPLRGLL…KVIDFINNEK (194 aa)) constitute a Lon N-terminal domain. 354–361 (GPPGVGKT) is an ATP binding site. The 182-residue stretch at 590–771 (EDQVGVVTGL…DEVLEHALVG (182 aa)) folds into the Lon proteolytic domain. Residues serine 677 and lysine 720 contribute to the active site.

Belongs to the peptidase S16 family. Homohexamer. Organized in a ring with a central cavity. Exists as a mixture of small oligomeric species in solution.

Its subcellular location is the cytoplasm. The catalysed reaction is Hydrolysis of proteins in presence of ATP.. ATP-dependent serine protease that mediates the selective degradation of mutant and abnormal proteins as well as certain short-lived regulatory proteins. Required for cellular homeostasis and for survival from DNA damage and developmental changes induced by stress. Degrades polypeptides processively to yield small peptide fragments that are 5 to 10 amino acids long. Binds to DNA in a double-stranded, site-specific manner. Has been implicated in preventing sigma(G) activity under non-sporulation conditions. This is Lon protease 1 from Bacillus subtilis (strain 168).